We begin with the raw amino-acid sequence, 572 residues long: Proline--tRNA ligase (572 aa).

The protein belongs to the class-II aminoacyl-tRNA synthetase family. ProS type 1 subfamily. Homodimer.

The protein localises to the cytoplasm. It catalyses the reaction tRNA(Pro) + L-proline + ATP = L-prolyl-tRNA(Pro) + AMP + diphosphate. Its function is as follows. Catalyzes the attachment of proline to tRNA(Pro) in a two-step reaction: proline is first activated by ATP to form Pro-AMP and then transferred to the acceptor end of tRNA(Pro). As ProRS can inadvertently accommodate and process non-cognate amino acids such as alanine and cysteine, to avoid such errors it has two additional distinct editing activities against alanine. One activity is designated as 'pretransfer' editing and involves the tRNA(Pro)-independent hydrolysis of activated Ala-AMP. The other activity is designated 'posttransfer' editing and involves deacylation of mischarged Ala-tRNA(Pro). The misacylated Cys-tRNA(Pro) is not edited by ProRS. The polypeptide is Proline--tRNA ligase (Caldicellulosiruptor bescii (strain ATCC BAA-1888 / DSM 6725 / KCTC 15123 / Z-1320) (Anaerocellum thermophilum)).